Consider the following 287-residue polypeptide: HTH-type transcriptional regulator MurR (287 aa).

The region spanning 1–77 (MLYLAKMRNA…MALIEEYSVN (77 aa)) is the HTH rpiR-type domain. Residues 37–56 (SRNLAKQLEVSQSSIVKFAQ) constitute a DNA-binding region (H-T-H motif). The 141-residue stretch at 128 to 268 (VINLISKARL…FVGMVQLNDV (141 aa)) folds into the SIS domain.

In terms of assembly, homotetramer.

Its pathway is amino-sugar metabolism; N-acetylmuramate degradation [regulation]. Functionally, represses the expression of the murPQ operon involved in the uptake and degradation of N-acetylmuramic acid (MurNAc). Binds to two adjacent inverted repeats within the operator region. MurNAc 6-phosphate, the substrate of MurQ, is the specific inducer that weakens binding of MurR to the operator. The chain is HTH-type transcriptional regulator MurR from Citrobacter koseri (strain ATCC BAA-895 / CDC 4225-83 / SGSC4696).